Consider the following 153-residue polypeptide: Endoribonuclease YbeY (153 aa).

Residues His113, His117, and His123 each coordinate Zn(2+).

It belongs to the endoribonuclease YbeY family. Requires Zn(2+) as cofactor.

The protein localises to the cytoplasm. In terms of biological role, single strand-specific metallo-endoribonuclease involved in late-stage 70S ribosome quality control and in maturation of the 3' terminus of the 16S rRNA. The sequence is that of Endoribonuclease YbeY from Aliivibrio fischeri (strain MJ11) (Vibrio fischeri).